A 116-amino-acid chain; its full sequence is uncharacterized protein (116 aa).

Transmembrane regions (helical) follow at residues 8–28 (FMIY…VSFA), 39–59 (GLLL…NPPF), and 75–95 (FLLI…YLMV).

It to M.jannaschii MJ1580.

The protein resides in the cell membrane. This is an uncharacterized protein from Methanothermobacter thermautotrophicus (strain ATCC 29096 / DSM 1053 / JCM 10044 / NBRC 100330 / Delta H) (Methanobacterium thermoautotrophicum).